Consider the following 60-residue polypeptide: Large ribosomal subunit protein uL30 (60 aa).

The protein belongs to the universal ribosomal protein uL30 family. Part of the 50S ribosomal subunit.

The polypeptide is Large ribosomal subunit protein uL30 (Baumannia cicadellinicola subsp. Homalodisca coagulata).